A 563-amino-acid chain; its full sequence is NADPH oxidase 1 (563 aa).

At 1–8 (MGNWLVNH) the chain is on the cytoplasmic side. Residues 9 to 31 (WLSVLFLVSWLGLNIFLFVYVFL) traverse the membrane as a helical segment. Over 32–44 (NYEKSDKYYYTRE) the chain is Extracellular. The helical transmembrane segment at 45-69 (ILGTALALARASALCLNFNSMVILI) threads the bilayer. The Ferric oxidoreductase domain occupies 54–282 (RASALCLNFN…LAPIAFYIFE (229 aa)). Topologically, residues 70–102 (PVCRNLLSFLRGTCSFCNHTLRKPLDHNLTFHK) are cytoplasmic. Heme is bound by residues histidine 101 and histidine 115. A helical transmembrane segment spans residues 103–123 (LVAYMICIFTAIHIIAHLFNF). Topologically, residues 124-167 (ERYSRSQQAMDGSLASVLSSLFHPEKEDSWLNPIQSPNVTVMYA) are extracellular. N-linked (GlcNAc...) asparagine glycosylation occurs at asparagine 161. Residues 168 to 188 (AFTSIAGLTGVVATVALVLMV) form a helical membrane-spanning segment. Residues 189–206 (TSAMEFIRRNYFELFWYT) are Cytoplasmic-facing. A helical membrane pass occupies residues 207–227 (HHLFIIYIICLGIHGLGGIVR). Heme contacts are provided by histidine 208 and histidine 220. At 228–395 (GQTEESMSES…TVSEDVFQYE (168 aa)) the chain is on the extracellular side. Residue asparagine 241 is glycosylated (N-linked (GlcNAc...) asparagine). The FAD-binding FR-type domain maps to 283-390 (RILRFYRSRQ…DGPFGTVSED (108 aa)). An FAD-binding site is contributed by 337–343 (HPFTLTS). The helical transmembrane segment at 396–416 (VAVLVGAGIGVTPFASFLKSI) threads the bilayer. Positions 396–535 (VAVLVGAGIG…GVFLCGPPTL (140 aa)) are interaction with NOXO1. Residues 417–563 (WYKFQRAHNK…VQFYFNKETF (147 aa)) lie on the Cytoplasmic side of the membrane. Threonine 429 carries the post-translational modification Phosphothreonine; by PKC/PRKCB.

In terms of assembly, NOX1, NOXA1, NOXO1, RAC1 and CYBA forms a functional multimeric complex supporting ROS production. Interacts with NOXO1. Interacts (via FAD-binding FR-type domain) with ARHGEF7 (via PH domain). The phosphorylated form at Thr-429 interacts with NOXA1 with greater affinity. FAD serves as cofactor. In terms of processing, phosphorylation at Thr-429 mediated by PKC/PRKBC positively regulates its interaction with NOXA1 and enzyme activity. In terms of tissue distribution, expressed in vascular smooth muscle cells.

It localises to the cell projection. The protein resides in the invadopodium membrane. The protein localises to the cell membrane. It catalyses the reaction NADPH + 2 O2 = 2 superoxide + NADP(+) + H(+). With respect to regulation, the oxidase activity is potentiated by NOXA1 and NOXO1. Its function is as follows. NADPH oxidase that catalyzes the generation of superoxide from molecular oxygen utilizing NADPH as an electron donor. This Rattus norvegicus (Rat) protein is NADPH oxidase 1 (Nox1).